We begin with the raw amino-acid sequence, 392 residues long: Chalcone synthase (392 aa).

Residue Cys165 is part of the active site.

Belongs to the thiolase-like superfamily. Chalcone/stilbene synthases family.

It catalyses the reaction (E)-4-coumaroyl-CoA + 3 malonyl-CoA + 3 H(+) = 2',4,4',6'-tetrahydroxychalcone + 3 CO2 + 4 CoA. The protein operates within secondary metabolite biosynthesis; flavonoid biosynthesis. In terms of biological role, the primary product of this enzyme is 4,2',4',6'-tetrahydroxychalcone (also termed naringenin-chalcone or chalcone) which can under specific conditions spontaneously isomerize into naringenin. In Persea americana (Avocado), this protein is Chalcone synthase (CHS).